Consider the following 584-residue polypeptide: Methionine--tRNA ligase (584 aa).

Positions 12–22 match the 'HIGH' region motif; sequence PYANGDLHLGH. Zn(2+) contacts are provided by Cys-144, Cys-147, Cys-157, and Cys-160. Positions 334–338 match the 'KMSKS' region motif; sequence QFSTS. Residue Thr-337 participates in ATP binding. Positions 541 to 563 are disordered; sequence EGRDRWAPSELEAGRPLPPPQPL.

This sequence belongs to the class-I aminoacyl-tRNA synthetase family. MetG type 1 subfamily. Monomer. Requires Zn(2+) as cofactor.

It is found in the cytoplasm. The enzyme catalyses tRNA(Met) + L-methionine + ATP = L-methionyl-tRNA(Met) + AMP + diphosphate. Its function is as follows. Is required not only for elongation of protein synthesis but also for the initiation of all mRNA translation through initiator tRNA(fMet) aminoacylation. This is Methionine--tRNA ligase from Thermomicrobium roseum (strain ATCC 27502 / DSM 5159 / P-2).